Consider the following 454-residue polypeptide: Bifunctional protein GlmU (454 aa).

Residues methionine 1–arginine 227 form a pyrophosphorylase region. UDP-N-acetyl-alpha-D-glucosamine-binding positions include leucine 9–glycine 12, lysine 23, glutamine 74, glycine 79–threonine 80, tyrosine 101–aspartate 103, glycine 138, glutamate 152, asparagine 167, and asparagine 225. Aspartate 103 lines the Mg(2+) pocket. Asparagine 225 contributes to the Mg(2+) binding site. The segment at leucine 228 to glutamate 248 is linker. An N-acetyltransferase region spans residues glycine 249–lysine 454. 2 residues coordinate UDP-N-acetyl-alpha-D-glucosamine: arginine 331 and lysine 349. Histidine 361 acts as the Proton acceptor in catalysis. Tyrosine 364 and asparagine 375 together coordinate UDP-N-acetyl-alpha-D-glucosamine. Acetyl-CoA-binding positions include alanine 378, asparagine 384–tyrosine 385, serine 403, alanine 421, and arginine 438.

The protein in the N-terminal section; belongs to the N-acetylglucosamine-1-phosphate uridyltransferase family. This sequence in the C-terminal section; belongs to the transferase hexapeptide repeat family. Homotrimer. The cofactor is Mg(2+).

It is found in the cytoplasm. It catalyses the reaction alpha-D-glucosamine 1-phosphate + acetyl-CoA = N-acetyl-alpha-D-glucosamine 1-phosphate + CoA + H(+). The enzyme catalyses N-acetyl-alpha-D-glucosamine 1-phosphate + UTP + H(+) = UDP-N-acetyl-alpha-D-glucosamine + diphosphate. The protein operates within nucleotide-sugar biosynthesis; UDP-N-acetyl-alpha-D-glucosamine biosynthesis; N-acetyl-alpha-D-glucosamine 1-phosphate from alpha-D-glucosamine 6-phosphate (route II): step 2/2. Its pathway is nucleotide-sugar biosynthesis; UDP-N-acetyl-alpha-D-glucosamine biosynthesis; UDP-N-acetyl-alpha-D-glucosamine from N-acetyl-alpha-D-glucosamine 1-phosphate: step 1/1. It functions in the pathway bacterial outer membrane biogenesis; LPS lipid A biosynthesis. Catalyzes the last two sequential reactions in the de novo biosynthetic pathway for UDP-N-acetylglucosamine (UDP-GlcNAc). The C-terminal domain catalyzes the transfer of acetyl group from acetyl coenzyme A to glucosamine-1-phosphate (GlcN-1-P) to produce N-acetylglucosamine-1-phosphate (GlcNAc-1-P), which is converted into UDP-GlcNAc by the transfer of uridine 5-monophosphate (from uridine 5-triphosphate), a reaction catalyzed by the N-terminal domain. The protein is Bifunctional protein GlmU of Mannheimia succiniciproducens (strain KCTC 0769BP / MBEL55E).